Consider the following 790-residue polypeptide: Phenylalanine--tRNA ligase beta subunit (790 aa).

The region spanning 39-154 is the tRNA-binding domain; it reads PDSLNTVVTG…ENTPLGESAC (116 aa). The B5 domain occupies 404 to 483; that stretch reads SDPLSLNIRP…FVQKTQKILP (80 aa). Positions 457, 463, 466, and 467 each coordinate Mg(2+). Residues 694-790 enclose the FDX-ACB domain; sequence PIYPSSSRDI…NLANIGKGNS (97 aa).

This sequence belongs to the phenylalanyl-tRNA synthetase beta subunit family. Type 1 subfamily. Tetramer of two alpha and two beta subunits. Mg(2+) is required as a cofactor.

The protein resides in the cytoplasm. It catalyses the reaction tRNA(Phe) + L-phenylalanine + ATP = L-phenylalanyl-tRNA(Phe) + AMP + diphosphate + H(+). The chain is Phenylalanine--tRNA ligase beta subunit (pheT) from Chlamydia muridarum (strain MoPn / Nigg).